The chain runs to 129 residues: MVIDTSALVAILTDEPDAELLEGAVADDPVRTMSTASYLETAIVIESRFGEPGGRELDLWLHRASVALVAVDADQADAARLAYRRYGKGRHRAGLNYGDCFSYALAKVSGQPLLFKGEAFRLTDVAAVH.

Residues 1–124 (MVIDTSALVA…FKGEAFRLTD (124 aa)) form the PINc domain. Residues aspartate 4 and aspartate 99 each contribute to the Mg(2+) site.

This sequence belongs to the PINc/VapC protein family. As to quaternary structure, forms a complex with VapB. Mg(2+) is required as a cofactor.

Functionally, toxic component of a type II toxin-antitoxin (TA) system. A sequence-specific endoribonuclease, cleavage occurs after the first AU in the consensus sequence AUA(U/A); RNA secondary structure is probably important in substrate choice. Cuts in 5' and 3' UTRs. The TA system acts as a post-transcriptional regulator of carbon metabolism; in M.smegmatis 3 TA systems (VapB-VapC, MazE-MazF and Phd-Doc) may be involved in monitoring the nutritional supply and physiological state of the cell, linking catabolic with anabolic reactions. When overexpressed inhibits cell growth, via translation; 10-fold in a wild-type strain, 100-fold in a vapB-vapC disruption mutant. Overexpression of VapC leads to differential expression of 205 genes; many down-regulated genes are predicted to be involved in the transport and catabolism of carbohydrates, while genes involved in phosphate transport and scavenging are up-regulated. VapC is bacteriostatic, not bacteriocidal; cells are ovoid, non-replicating and have decreased transcription, becoming dormant. Digests ssRNA but not tRNA, dsRNA, ssDNA or dsDNA. The VapB-VapC complex binds its own promoter DNA, and VapC alone binds RNA. The polypeptide is Ribonuclease VapC (vapC) (Mycolicibacterium smegmatis (strain ATCC 700084 / mc(2)155) (Mycobacterium smegmatis)).